A 406-amino-acid polypeptide reads, in one-letter code: Coenzyme A biosynthesis bifunctional protein CoaBC (406 aa).

The phosphopantothenoylcysteine decarboxylase stretch occupies residues 1–191 (MLNNRNVLLC…ETSAPLEGKH (191 aa)). Cys-157 acts as the Proton donor in catalysis. Residues 192 to 406 (VVITAGPTRE…ALSKQTGERS (215 aa)) form a phosphopantothenate--cysteine ligase region. CTP contacts are provided by Asp-281, Lys-291, Phe-325, Lys-339, and Lys-343.

It in the N-terminal section; belongs to the HFCD (homo-oligomeric flavin containing Cys decarboxylase) superfamily. In the C-terminal section; belongs to the PPC synthetase family. Mg(2+) is required as a cofactor. It depends on FMN as a cofactor.

It catalyses the reaction N-[(R)-4-phosphopantothenoyl]-L-cysteine + H(+) = (R)-4'-phosphopantetheine + CO2. The enzyme catalyses (R)-4'-phosphopantothenate + L-cysteine + CTP = N-[(R)-4-phosphopantothenoyl]-L-cysteine + CMP + diphosphate + H(+). The protein operates within cofactor biosynthesis; coenzyme A biosynthesis; CoA from (R)-pantothenate: step 2/5. Its pathway is cofactor biosynthesis; coenzyme A biosynthesis; CoA from (R)-pantothenate: step 3/5. In terms of biological role, catalyzes two sequential steps in the biosynthesis of coenzyme A. In the first step cysteine is conjugated to 4'-phosphopantothenate to form 4-phosphopantothenoylcysteine. In the second step the latter compound is decarboxylated to form 4'-phosphopantotheine. This chain is Coenzyme A biosynthesis bifunctional protein CoaBC, found in Bacillus subtilis (strain 168).